A 227-amino-acid chain; its full sequence is Cytochrome c oxidase subunit 2 (227 aa).

At 1–22 (MAYPFQLGLQDATSPIMEELMN) the chain is on the mitochondrial intermembrane side. Residues 23–44 (FHDHTLMIVFLISSLVLYIISL) traverse the membrane as a helical segment. The Mitochondrial matrix segment spans residues 45–60 (MLTTKLTHTSTMDAQE). A helical transmembrane segment spans residues 61–81 (VETIWTILPAVILIMIALPSL). The Mitochondrial intermembrane portion of the chain corresponds to 82 to 227 (RILYMMDEIN…YFENWSASMI (146 aa)). Cu cation-binding residues include His161, Cys196, Glu198, Cys200, His204, and Met207. A Mg(2+)-binding site is contributed by Glu198. The residue at position 218 (Tyr218) is a Phosphotyrosine.

This sequence belongs to the cytochrome c oxidase subunit 2 family. As to quaternary structure, component of the cytochrome c oxidase (complex IV, CIV), a multisubunit enzyme composed of 14 subunits. The complex is composed of a catalytic core of 3 subunits MT-CO1, MT-CO2 and MT-CO3, encoded in the mitochondrial DNA, and 11 supernumerary subunits COX4I, COX5A, COX5B, COX6A, COX6B, COX6C, COX7A, COX7B, COX7C, COX8 and NDUFA4, which are encoded in the nuclear genome. The complex exists as a monomer or a dimer and forms supercomplexes (SCs) in the inner mitochondrial membrane with NADH-ubiquinone oxidoreductase (complex I, CI) and ubiquinol-cytochrome c oxidoreductase (cytochrome b-c1 complex, complex III, CIII), resulting in different assemblies (supercomplex SCI(1)III(2)IV(1) and megacomplex MCI(2)III(2)IV(2)). Found in a complex with TMEM177, COA6, COX18, COX20, SCO1 and SCO2. Interacts with TMEM177 in a COX20-dependent manner. Interacts with COX20. Interacts with COX16. Cu cation is required as a cofactor.

The protein resides in the mitochondrion inner membrane. The catalysed reaction is 4 Fe(II)-[cytochrome c] + O2 + 8 H(+)(in) = 4 Fe(III)-[cytochrome c] + 2 H2O + 4 H(+)(out). Functionally, component of the cytochrome c oxidase, the last enzyme in the mitochondrial electron transport chain which drives oxidative phosphorylation. The respiratory chain contains 3 multisubunit complexes succinate dehydrogenase (complex II, CII), ubiquinol-cytochrome c oxidoreductase (cytochrome b-c1 complex, complex III, CIII) and cytochrome c oxidase (complex IV, CIV), that cooperate to transfer electrons derived from NADH and succinate to molecular oxygen, creating an electrochemical gradient over the inner membrane that drives transmembrane transport and the ATP synthase. Cytochrome c oxidase is the component of the respiratory chain that catalyzes the reduction of oxygen to water. Electrons originating from reduced cytochrome c in the intermembrane space (IMS) are transferred via the dinuclear copper A center (CU(A)) of subunit 2 and heme A of subunit 1 to the active site in subunit 1, a binuclear center (BNC) formed by heme A3 and copper B (CU(B)). The BNC reduces molecular oxygen to 2 water molecules using 4 electrons from cytochrome c in the IMS and 4 protons from the mitochondrial matrix. The polypeptide is Cytochrome c oxidase subunit 2 (Mtco2) (Mus musculus (Mouse)).